A 109-amino-acid chain; its full sequence is Globin (109 aa).

One can recognise a Globin domain in the interval Pro3–Leu109.

This sequence belongs to the globin family. Monomer.

In terms of biological role, oxygen binding protein. The chain is Globin from Dicrocoelium dendriticum (Small liver fluke).